The primary structure comprises 169 residues: ATP synthase subunit b (169 aa).

The chain crosses the membrane as a helical span at residues 11 to 31; sequence IPSFIAQIVNFGLLLGLLYLF.

Belongs to the ATPase B chain family. As to quaternary structure, F-type ATPases have 2 components, F(1) - the catalytic core - and F(0) - the membrane proton channel. F(1) has five subunits: alpha(3), beta(3), gamma(1), delta(1), epsilon(1). F(0) has three main subunits: a(1), b(2) and c(10-14). The alpha and beta chains form an alternating ring which encloses part of the gamma chain. F(1) is attached to F(0) by a central stalk formed by the gamma and epsilon chains, while a peripheral stalk is formed by the delta and b chains.

The protein resides in the cell membrane. Its function is as follows. F(1)F(0) ATP synthase produces ATP from ADP in the presence of a proton or sodium gradient. F-type ATPases consist of two structural domains, F(1) containing the extramembraneous catalytic core and F(0) containing the membrane proton channel, linked together by a central stalk and a peripheral stalk. During catalysis, ATP synthesis in the catalytic domain of F(1) is coupled via a rotary mechanism of the central stalk subunits to proton translocation. Component of the F(0) channel, it forms part of the peripheral stalk, linking F(1) to F(0). The chain is ATP synthase subunit b from Dehalococcoides mccartyi (strain ATCC BAA-2100 / JCM 16839 / KCTC 5957 / BAV1).